The primary structure comprises 81 residues: Mu/omega-theraphotoxin-Hs1a (81 aa).

The N-terminal stretch at 1–21 is a signal peptide; sequence MRASMFLALAGLVLLFVVCYA. Residues 22-48 constitute a propeptide that is removed on maturation; sequence SESEEKEFPRELLFKFFAVDDFKGEER. 3 disulfide bridges follow: C50–C65, C57–C70, and C64–C77.

The protein belongs to the neurotoxin 10 (Hwtx-1) family. 23 (HwTx-I) subfamily. As to expression, expressed by the venom gland.

It localises to the secreted. In terms of biological role, lethal toxin with multiple biological activities. Inhibits voltage-gated TTX-sensitive sodium channels in DRG neurons (IC(50)=55 nM) and also shows activity when directly tested on Nav1.7/SCN9A (IC(50)=25.1-630 nM). Inhibits N-type calcium channels (Cav2.2/CACNA1B (IC(50)=100 nM)). Also blocks neuromuscular transmission. In vivo, intrathecal injected toxin shows analgesic activity in the rat formalin-induced pain model, without induction of motor dysfunction in rats. The polypeptide is Mu/omega-theraphotoxin-Hs1a (Cyriopagopus schmidti (Chinese bird spider)).